The primary structure comprises 399 residues: Dual-specificity RNA methyltransferase RlmN (399 aa).

Glutamate 120 (proton acceptor) is an active-site residue. The region spanning 126 to 367 (EEGRGTLCVS…SPVRTPRGRD (242 aa)) is the Radical SAM core domain. Residues cysteine 133 and cysteine 372 are joined by a disulfide bond. [4Fe-4S] cluster contacts are provided by cysteine 140, cysteine 144, and cysteine 147. S-adenosyl-L-methionine-binding positions include 198 to 199 (GE), serine 230, 252 to 254 (SLH), and asparagine 329. The S-methylcysteine intermediate role is filled by cysteine 372.

This sequence belongs to the radical SAM superfamily. RlmN family. Requires [4Fe-4S] cluster as cofactor.

It is found in the cytoplasm. It catalyses the reaction adenosine(2503) in 23S rRNA + 2 reduced [2Fe-2S]-[ferredoxin] + 2 S-adenosyl-L-methionine = 2-methyladenosine(2503) in 23S rRNA + 5'-deoxyadenosine + L-methionine + 2 oxidized [2Fe-2S]-[ferredoxin] + S-adenosyl-L-homocysteine. The enzyme catalyses adenosine(37) in tRNA + 2 reduced [2Fe-2S]-[ferredoxin] + 2 S-adenosyl-L-methionine = 2-methyladenosine(37) in tRNA + 5'-deoxyadenosine + L-methionine + 2 oxidized [2Fe-2S]-[ferredoxin] + S-adenosyl-L-homocysteine. Functionally, specifically methylates position 2 of adenine 2503 in 23S rRNA and position 2 of adenine 37 in tRNAs. m2A2503 modification seems to play a crucial role in the proofreading step occurring at the peptidyl transferase center and thus would serve to optimize ribosomal fidelity. This Parvibaculum lavamentivorans (strain DS-1 / DSM 13023 / NCIMB 13966) protein is Dual-specificity RNA methyltransferase RlmN.